We begin with the raw amino-acid sequence, 272 residues long: Ethanolamine ammonia-lyase small subunit (272 aa).

Residues Val-161, Glu-182, and Cys-211 each coordinate adenosylcob(III)alamin.

It belongs to the EutC family. The basic unit is a heterodimer which dimerizes to form tetramers. The heterotetramers trimerize; 6 large subunits form a core ring with 6 small subunits projecting outwards. Adenosylcob(III)alamin serves as cofactor.

The protein resides in the bacterial microcompartment. It carries out the reaction ethanolamine = acetaldehyde + NH4(+). It functions in the pathway amine and polyamine degradation; ethanolamine degradation. Functionally, catalyzes the deamination of various vicinal amino-alcohols to oxo compounds. Allows this organism to utilize ethanolamine as the sole source of nitrogen and carbon in the presence of external vitamin B12. In Pseudomonas putida (strain W619), this protein is Ethanolamine ammonia-lyase small subunit.